The following is a 944-amino-acid chain: Proline and serine-rich protein 1 (944 aa).

Residue M1 is modified to N-acetylmethionine. 4 disordered regions span residues 233 to 285 (PPPY…PVPT), 369 to 396 (PGPS…SEAF), 608 to 633 (KTEP…HGTL), and 912 to 944 (ESYP…SGWQ). The segment covering 248 to 274 (LSNPSKPIQNQTFSTPASQLFSPHGSN) has biased composition (polar residues). The span at 275–285 (PSTPAATPVPT) shows a compositional bias: low complexity. Positions 932 to 944 (FSLQPSLSQSGWQ) are enriched in polar residues.

Interacts with TET2 and OGT; this interaction mediates TET2 O-GlcNAcylation and stability by promoting the interaction between OGT and TET2. Interacts with KDM6A. Interacts with TET1. Post-translationally, glycosylated. Interaction with OGT leads to GlcNAcylation.

Mediates OGT interaction with and O-GlcNAcylation of TET2 to control TET2 stabilization at enhancers and CpG islands (CGIs). In Homo sapiens (Human), this protein is Proline and serine-rich protein 1.